The chain runs to 298 residues: Homoserine kinase (298 aa).

92 to 102 (PLARGLGSSAT) contributes to the ATP binding site.

This sequence belongs to the GHMP kinase family. Homoserine kinase subfamily.

Its subcellular location is the cytoplasm. It carries out the reaction L-homoserine + ATP = O-phospho-L-homoserine + ADP + H(+). The protein operates within amino-acid biosynthesis; L-threonine biosynthesis; L-threonine from L-aspartate: step 4/5. Catalyzes the ATP-dependent phosphorylation of L-homoserine to L-homoserine phosphate. The sequence is that of Homoserine kinase (thrB) from Nostoc sp. (strain PCC 7120 / SAG 25.82 / UTEX 2576).